Here is a 395-residue protein sequence, read N- to C-terminus: Flap endonuclease 1 (395 aa).

The tract at residues 1-104 (MGIKHLYQVI…GELAKRSARK (104 aa)) is N-domain. D34 provides a ligand contact to Mg(2+). Positions 47 and 70 each coordinate DNA. D86 provides a ligand contact to Mg(2+). Residues 99-126 (KRSARKREAHEAHEEAKETGTAEDMEKF) are disordered. The segment at 122-253 (DMEKFSRRTV…NTALKLIREH (132 aa)) is I-domain. E158, E160, D179, and D181 together coordinate Mg(2+). E158 is a binding site for DNA. G231 and D233 together coordinate DNA. D233 is a binding site for Mg(2+). The interval 341–349 (QQSRLEGFF) is interaction with PCNA. A compositionally biased stretch (basic and acidic residues) spans 356 to 389 (EAEKASLKRKHDEKIEEQKKRKKEEAKAKKEAKA). A disordered region spans residues 356–395 (EAEKASLKRKHDEKIEEQKKRKKEEAKAKKEAKARPRGAV).

The protein belongs to the XPG/RAD2 endonuclease family. FEN1 subfamily. In terms of assembly, interacts with PCNA. Three molecules of fen1 bind to one PCNA trimer with each molecule binding to one PCNA monomer. PCNA stimulates the nuclease activity without altering cleavage specificity. Mg(2+) serves as cofactor. In terms of processing, phosphorylated. Phosphorylation upon DNA damage induces relocalization to the nuclear plasma.

The protein localises to the nucleus. Its subcellular location is the nucleolus. The protein resides in the nucleoplasm. It localises to the mitochondrion. Structure-specific nuclease with 5'-flap endonuclease and 5'-3' exonuclease activities involved in DNA replication and repair. During DNA replication, cleaves the 5'-overhanging flap structure that is generated by displacement synthesis when DNA polymerase encounters the 5'-end of a downstream Okazaki fragment. It enters the flap from the 5'-end and then tracks to cleave the flap base, leaving a nick for ligation. Also involved in the long patch base excision repair (LP-BER) pathway, by cleaving within the apurinic/apyrimidinic (AP) site-terminated flap. Acts as a genome stabilization factor that prevents flaps from equilibrating into structures that lead to duplications and deletions. Also possesses 5'-3' exonuclease activity on nicked or gapped double-stranded DNA, and exhibits RNase H activity. Also involved in replication and repair of rDNA and in repairing mitochondrial DNA. The polypeptide is Flap endonuclease 1 (fen1) (Talaromyces stipitatus (strain ATCC 10500 / CBS 375.48 / QM 6759 / NRRL 1006) (Penicillium stipitatum)).